The sequence spans 344 residues: Membrane progestin receptor delta (344 aa).

Residues 1-51 lie on the Cytoplasmic side of the membrane; it reads MLSLKLPQLLQVHQVPRVFWEDGIMSGYRRPTSSALDCVLSSFQMTNETVN. The chain crosses the membrane as a helical span at residues 52 to 72; the sequence is IWTHFLPTWYFLWRLLALAGG. The Extracellular segment spans residues 73 to 83; that stretch reads PGFRAEPYHWP. A helical transmembrane segment spans residues 84 to 104; it reads LLVFLLPACLYPFASCCAHTF. Residues 105-113 lie on the Cytoplasmic side of the membrane; that stretch reads SSMSPRMRH. The chain crosses the membrane as a helical span at residues 114–134; sequence ICYFLDYGALSLYSLGCAFPY. Over 135 to 147 the chain is Extracellular; it reads AAYSMPASWLHGH. A helical membrane pass occupies residues 148–168; sequence LHQFFVPAAALNSFLCTGLSC. Topologically, residues 169 to 217 are cytoplasmic; that stretch reads YSRFLELESPGLSKVLRTGAFAYPFLFDNLPLFYRLGLCWGRGHGCGQE. Residues 218-238 traverse the membrane as a helical segment; it reads ALSTSHGYHLFCALLTGFLFA. The Extracellular portion of the chain corresponds to 239–258; the sequence is SHLPERLAPGRFDYIGHSHQ. A helical transmembrane segment spans residues 259 to 279; it reads LFHICAVLGTHFQLEAVLADM. Topologically, residues 280–292 are cytoplasmic; it reads GSRRAWLATQEPA. The helical transmembrane segment at 293-313 threads the bilayer; it reads LGLAGTVATLVLAAAGNLLII. The Extracellular segment spans residues 314 to 344; sequence AAFTATLLRAPSTCPLLQGGPLEGGTQAKQQ.

The protein belongs to the ADIPOR family. Homodimer. Brain specific. Highly expressed in the hypothalamus, also expressed in forebrain, amygdala, corpus callosum and spinal cord.

The protein localises to the cell membrane. Plasma membrane progesterone (P4) receptor coupled to G proteins. Seems to act through a G(s) mediated pathway. Involved in neurosteroid inhibition of apoptosis. May be involved in regulating rapid P4 signaling in the nervous system. Also binds dehydroepiandrosterone (DHEA), pregnanolone, pregnenolone and allopregnanolone. In Homo sapiens (Human), this protein is Membrane progestin receptor delta.